The chain runs to 430 residues: UDP-N-acetylmuramoylalanine--D-glutamate ligase (430 aa).

Residue 109-115 (GTDGKST) coordinates ATP.

Belongs to the MurCDEF family.

The protein resides in the cytoplasm. The catalysed reaction is UDP-N-acetyl-alpha-D-muramoyl-L-alanine + D-glutamate + ATP = UDP-N-acetyl-alpha-D-muramoyl-L-alanyl-D-glutamate + ADP + phosphate + H(+). Its pathway is cell wall biogenesis; peptidoglycan biosynthesis. Functionally, cell wall formation. Catalyzes the addition of glutamate to the nucleotide precursor UDP-N-acetylmuramoyl-L-alanine (UMA). This is UDP-N-acetylmuramoylalanine--D-glutamate ligase from Thermotoga petrophila (strain ATCC BAA-488 / DSM 13995 / JCM 10881 / RKU-1).